Consider the following 253-residue polypeptide: Ethylene-responsive transcription factor RAP2-11 (253 aa).

The segment at residues 21 to 78 (KFVGVRQRPSGKWVAEIKDTTQKIRMWLGTFETAEEAARAYDEAACLLRGSNTRTNFA) is a DNA-binding region (AP2/ERF).

This sequence belongs to the AP2/ERF transcription factor family. ERF subfamily.

The protein resides in the nucleus. Probably acts as a transcriptional activator. Binds to the GCC-box pathogenesis-related promoter element. May be involved in the regulation of gene expression by stress factors and by components of stress signal transduction pathways. The chain is Ethylene-responsive transcription factor RAP2-11 (RAP2-11) from Arabidopsis thaliana (Mouse-ear cress).